Here is a 256-residue protein sequence, read N- to C-terminus: ATP-dependent dethiobiotin synthetase BioD (256 aa).

13–18 contacts ATP; the sequence is EVGKTY. Threonine 17 lines the Mg(2+) pocket. Lysine 38 is a catalytic residue. A substrate-binding site is contributed by serine 42. Residues aspartate 56, 118-121, and 187-188 contribute to the ATP site; these read EGAG and NR. The Mg(2+) site is built by aspartate 56 and glutamate 118.

The protein belongs to the dethiobiotin synthetase family. As to quaternary structure, homodimer. It depends on Mg(2+) as a cofactor.

The protein localises to the cytoplasm. The catalysed reaction is (7R,8S)-7,8-diammoniononanoate + CO2 + ATP = (4R,5S)-dethiobiotin + ADP + phosphate + 3 H(+). The protein operates within cofactor biosynthesis; biotin biosynthesis; biotin from 7,8-diaminononanoate: step 1/2. Catalyzes a mechanistically unusual reaction, the ATP-dependent insertion of CO2 between the N7 and N8 nitrogen atoms of 7,8-diaminopelargonic acid (DAPA, also called 7,8-diammoniononanoate) to form a ureido ring. In Rhodopirellula baltica (strain DSM 10527 / NCIMB 13988 / SH1), this protein is ATP-dependent dethiobiotin synthetase BioD.